Reading from the N-terminus, the 227-residue chain is Cytidylate kinase (227 aa).

Position 12–20 (12–20 (GPSGVGKGT)) interacts with ATP.

It belongs to the cytidylate kinase family. Type 1 subfamily.

Its subcellular location is the cytoplasm. The enzyme catalyses CMP + ATP = CDP + ADP. The catalysed reaction is dCMP + ATP = dCDP + ADP. This chain is Cytidylate kinase, found in Shewanella denitrificans (strain OS217 / ATCC BAA-1090 / DSM 15013).